Reading from the N-terminus, the 363-residue chain is S-adenosylmethionine:tRNA ribosyltransferase-isomerase (363 aa).

The protein belongs to the QueA family. As to quaternary structure, monomer.

The protein resides in the cytoplasm. It catalyses the reaction 7-aminomethyl-7-carbaguanosine(34) in tRNA + S-adenosyl-L-methionine = epoxyqueuosine(34) in tRNA + adenine + L-methionine + 2 H(+). Its pathway is tRNA modification; tRNA-queuosine biosynthesis. Its function is as follows. Transfers and isomerizes the ribose moiety from AdoMet to the 7-aminomethyl group of 7-deazaguanine (preQ1-tRNA) to give epoxyqueuosine (oQ-tRNA). The protein is S-adenosylmethionine:tRNA ribosyltransferase-isomerase of Brucella abortus (strain S19).